The chain runs to 81 residues: UPF0180 protein BLi01634/BL05144 (81 aa).

It belongs to the UPF0180 family.

The chain is UPF0180 protein BLi01634/BL05144 from Bacillus licheniformis (strain ATCC 14580 / DSM 13 / JCM 2505 / CCUG 7422 / NBRC 12200 / NCIMB 9375 / NCTC 10341 / NRRL NRS-1264 / Gibson 46).